A 92-amino-acid chain; its full sequence is UPF0223 protein SPy_1248/M5005_Spy0958 (92 aa).

The protein belongs to the UPF0223 family.

The protein is UPF0223 protein SPy_1248/M5005_Spy0958 of Streptococcus pyogenes serotype M1.